Consider the following 434-residue polypeptide: O-phosphoseryl-tRNA(Sec) selenium transferase (434 aa).

The interval 1–40 is tetramerization; the sequence is MGLNITGLIPKHMENRGKLTLKENLKIIENILEQRKAPEN. Arg71 is a pyridoxal 5'-phosphate binding site. The phosphate loop (P-loop) stretch occupies residues 92–102; the sequence is GRSGNLIDPQP. The substrate site is built by Arg93, Ser94, and Gln101. Lys277 is subject to N6-(pyridoxal phosphate)lysine. Arg306 contributes to the substrate binding site.

Belongs to the SepSecS family. As to quaternary structure, homotetramer. Pyridoxal 5'-phosphate is required as a cofactor.

The enzyme catalyses O-phospho-L-seryl-tRNA(Sec) + selenophosphate + H2O = L-selenocysteinyl-tRNA(Sec) + 2 phosphate. The protein operates within aminoacyl-tRNA biosynthesis; selenocysteinyl-tRNA(Sec) biosynthesis; selenocysteinyl-tRNA(Sec) from L-seryl-tRNA(Sec) (archaeal/eukaryal route): step 2/2. Converts O-phosphoseryl-tRNA(Sec) to selenocysteinyl-tRNA(Sec) required for selenoprotein biosynthesis. The protein is O-phosphoseryl-tRNA(Sec) selenium transferase (spcS) of Methanocaldococcus jannaschii (strain ATCC 43067 / DSM 2661 / JAL-1 / JCM 10045 / NBRC 100440) (Methanococcus jannaschii).